A 491-amino-acid chain; its full sequence is CRM-domain containing factor CFM9, mitochondrial (491 aa).

The transit peptide at 1–25 (MNQVFKGWSRGMSTSRGRSMRSKVE) directs the protein to the mitochondrion. A disordered region spans residues 1-34 (MNQVFKGWSRGMSTSRGRSMRSKVESRMRKESGK). Residues 22 to 34 (SKVESRMRKESGK) are compositionally biased toward basic and acidic residues. The CRM domain maps to 90-187 (ELFTSEQVQA…RNYRQPKNLI (98 aa)). The span at 255–265 (PYVFHGDKQSE) shows a compositional bias: basic and acidic residues. 2 disordered regions span residues 255 to 287 (PYVF…DQEE) and 328 to 491 (RSRT…WDSD). Positions 277–287 (EPGDEDSDQEE) are enriched in acidic residues. Residues 345 to 359 (RRNDRDTHSQRRPND) are compositionally biased toward basic and acidic residues. Positions 360 to 375 (SDDDDDDGELDSEDDE) are enriched in acidic residues. Residues 392-416 (RPREDFKRRSPDPRPRPRAQVRSDD) show a composition bias toward basic and acidic residues. Residues 453-478 (TVSASSSKQSRFRNNSSRDGINNSKS) show a composition bias toward polar residues.

As to expression, highly expressed in roots and meristemic regions of young seedlings. Expressed at low levels in stems, trichomes and stigma.

The protein localises to the mitochondrion. Its function is as follows. Involved in the splicing of group II introns in mitochondria. Required for the splicing of mitochondrial introns found in nad1, nad2, nad4, nad5, nad7, rps3 and cox2 genes. Splicing of mitochondrial introns is crucial for mitochondrial biogenesis and function, plant growth and development, and plant response to abiotic stresses. The polypeptide is CRM-domain containing factor CFM9, mitochondrial (Arabidopsis thaliana (Mouse-ear cress)).